We begin with the raw amino-acid sequence, 173 residues long: MILGDRDLKYYLEKGWIVISPLTQDTIRENGVDLRVGGEIARFKKTDEIYEDGKDPRSFYEIEKGDEFIIYPNEHVLLVTEEYVKLPNDVMAFVNLRSSFARLGLFVPPTIVDAGFEGQLTIEVLGSAFPVKIKRGTRFLHLIFARTLTPVENPYHGKYQGQQGVTLPKFKFR.

Residues 97 to 102 and aspartate 113 each bind dCTP; that span reads RSSFAR. Glutamate 123 acts as the Proton donor/acceptor in catalysis. DCTP-binding residues include tyrosine 155 and glutamine 162.

This sequence belongs to the dCTP deaminase family. Homotrimer.

It carries out the reaction dCTP + H2O + H(+) = dUTP + NH4(+). It participates in pyrimidine metabolism; dUMP biosynthesis; dUMP from dCTP (dUTP route): step 1/2. Functionally, catalyzes the deamination of dCTP to dUTP. The protein is dCTP deaminase of Acidianus ambivalens (Desulfurolobus ambivalens).